A 435-amino-acid polypeptide reads, in one-letter code: AMSH-like protease sst2 (435 aa).

Residues 162 to 181 (TDLLSPDSQKLSKSSSDLPQ) show a composition bias toward low complexity. The interval 162 to 185 (TDLLSPDSQKLSKSSSDLPQFDYP) is disordered. The residue at position 192 (T192) is a Phosphothreonine. Positions 262–392 (TIYLPKLLKK…FRLLDPEGLQ (131 aa)) constitute an MPN domain. H341, H343, D354, H356, C397, H404, and H406 together coordinate Zn(2+). The short motif at 341–354 (HTHPTQTCFMSSVD) is the JAMM motif element.

It belongs to the peptidase M67C family. Zn(2+) serves as cofactor.

The protein resides in the cytoplasm. The protein localises to the endosome. Functionally, zinc metalloprotease that specifically cleaves 'Lys-63'-linked polyubiquitin chains. Does not cleave 'Lys-48'-linked polyubiquitin chains. Plays a role in the multivesicular body (MVB) sorting pathway. Required for ubiquitin-dependent sorting of proteins into the endosome and subsequent trafficking to the vacuole. May regulate MVB sorting through deubiquitination of ubiquitinated ESCRT proteins. The sequence is that of AMSH-like protease sst2 (sst2) from Schizosaccharomyces pombe (strain 972 / ATCC 24843) (Fission yeast).